The following is a 193-amino-acid chain: Xanthine phosphoribosyltransferase (193 aa).

Residues Leu-20 and Asn-27 each coordinate xanthine. 128 to 132 (ASGGT) contacts 5-phospho-alpha-D-ribose 1-diphosphate. Residue Lys-156 coordinates xanthine.

Belongs to the purine/pyrimidine phosphoribosyltransferase family. Xpt subfamily. Homodimer.

The protein resides in the cytoplasm. It catalyses the reaction XMP + diphosphate = xanthine + 5-phospho-alpha-D-ribose 1-diphosphate. Its pathway is purine metabolism; XMP biosynthesis via salvage pathway; XMP from xanthine: step 1/1. Functionally, converts the preformed base xanthine, a product of nucleic acid breakdown, to xanthosine 5'-monophosphate (XMP), so it can be reused for RNA or DNA synthesis. The polypeptide is Xanthine phosphoribosyltransferase (Deinococcus deserti (strain DSM 17065 / CIP 109153 / LMG 22923 / VCD115)).